The sequence spans 356 residues: Peptide chain release factor 1 (356 aa).

Position 234 is an N5-methylglutamine (glutamine 234).

It belongs to the prokaryotic/mitochondrial release factor family. In terms of processing, methylated by PrmC. Methylation increases the termination efficiency of RF1.

It is found in the cytoplasm. Its function is as follows. Peptide chain release factor 1 directs the termination of translation in response to the peptide chain termination codons UAG and UAA. This is Peptide chain release factor 1 from Parafrankia sp. (strain EAN1pec).